We begin with the raw amino-acid sequence, 155 residues long: MKLLVVAVGQRMPDWAQTAWDDYAKRFPPELKLELRAVKTEPRGSKSLETLYAAERERIEGAIAKGMRIVVLDERGTALTTKALAARLQAWQGEGDDVALVIGGPDGLDPAFKAAAHERIRLSDLTLPHAMARVLLVEQLYRAWSVNAGHPYHRE.

Residues leucine 72, glycine 103, and leucine 122–leucine 127 each bind S-adenosyl-L-methionine.

Belongs to the RNA methyltransferase RlmH family. In terms of assembly, homodimer.

It is found in the cytoplasm. The enzyme catalyses pseudouridine(1915) in 23S rRNA + S-adenosyl-L-methionine = N(3)-methylpseudouridine(1915) in 23S rRNA + S-adenosyl-L-homocysteine + H(+). Functionally, specifically methylates the pseudouridine at position 1915 (m3Psi1915) in 23S rRNA. The protein is Ribosomal RNA large subunit methyltransferase H of Variovorax paradoxus (strain S110).